The sequence spans 395 residues: Acetate kinase 2 (395 aa).

Residue N8 participates in Mg(2+) binding. Residue K15 participates in ATP binding. Substrate is bound at residue R89. Residue D146 is the Proton donor/acceptor of the active site. Residues 206–210, 283–285, and 331–335 contribute to the ATP site; these read HIGNG, DMR, and GVGEN. E383 serves as a coordination point for Mg(2+).

This sequence belongs to the acetokinase family. Homodimer. It depends on Mg(2+) as a cofactor. Requires Mn(2+) as cofactor.

It is found in the cytoplasm. The catalysed reaction is acetate + ATP = acetyl phosphate + ADP. The protein operates within metabolic intermediate biosynthesis; acetyl-CoA biosynthesis; acetyl-CoA from acetate: step 1/2. Catalyzes the formation of acetyl phosphate from acetate and ATP. Can also catalyze the reverse reaction. This is Acetate kinase 2 from Lactococcus lactis subsp. lactis (strain IL1403) (Streptococcus lactis).